The chain runs to 295 residues: Sulfotransferase 1A1 (295 aa).

3'-phosphoadenylyl sulfate is bound at residue lysine 48–tryptophan 53. Residue lysine 106 to histidine 108 coordinates substrate. Histidine 108 acts as the Proton acceptor in catalysis. Residues arginine 130, serine 138, tyrosine 193, threonine 227 to methionine 232, and phenylalanine 255 to glycine 259 contribute to the 3'-phosphoadenylyl sulfate site. Position 138 is a phosphoserine (serine 138).

Belongs to the sulfotransferase 1 family. In terms of assembly, homodimer. As to expression, liver, lung, adrenal, brain, platelets and skin.

It localises to the cytoplasm. It catalyses the reaction a phenol + 3'-phosphoadenylyl sulfate = an aryl sulfate + adenosine 3',5'-bisphosphate + H(+). It carries out the reaction 17beta-estradiol + 3'-phosphoadenylyl sulfate = 17beta-estradiol 3-sulfate + adenosine 3',5'-bisphosphate + H(+). The enzyme catalyses 4-ethylphenol + 3'-phosphoadenylyl sulfate = 4-ethylphenyl sulfate + adenosine 3',5'-bisphosphate + H(+). The catalysed reaction is 4-nitrophenol + 3'-phosphoadenylyl sulfate = 4-nitrophenyl sulfate + adenosine 3',5'-bisphosphate. It catalyses the reaction dopamine + 3'-phosphoadenylyl sulfate = dopamine 3-O-sulfate + adenosine 3',5'-bisphosphate + H(+). It carries out the reaction dopamine + 3'-phosphoadenylyl sulfate = dopamine 4-O-sulfate + adenosine 3',5'-bisphosphate + H(+). The enzyme catalyses 3,3',5-triiodo-L-thyronine + 3'-phosphoadenylyl sulfate = 3,3',5-triiodo-L-thyronine sulfate + adenosine 3',5'-bisphosphate + H(+). The catalysed reaction is 3,3',5'-triiodo-L-thyronine + 3'-phosphoadenylyl sulfate = 3,3',5'-triiodo-L-thyronine sulfate + adenosine 3',5'-bisphosphate + H(+). It catalyses the reaction 3,3'-diiodo-L-thyronine + 3'-phosphoadenylyl sulfate = 3,3'-diiodo-L-thyronine sulfate + adenosine 3',5'-bisphosphate + H(+). It carries out the reaction L-thyroxine + 3'-phosphoadenylyl sulfate = L-thyroxine sulfate + adenosine 3',5'-bisphosphate + H(+). Functionally, sulfotransferase that utilizes 3'-phospho-5'-adenylyl sulfate (PAPS) as sulfonate donor to catalyze the sulfate conjugation of a wide variety of acceptor molecules bearing a hydroxyl or an amine group. Sulfonation increases the water solubility of most compounds, and therefore their renal excretion, but it can also result in bioactivation to form active metabolites. Displays broad substrate specificity for small phenolic compounds. Plays an important role in the sulfonation of endogenous molecules such as steroid hormones. Mediates the sulfate conjugation of a variety of xenobiotics, including the drugs acetaminophen and minoxidil. Mediates also the metabolic activation of carcinogenic N-hydroxyarylamines leading to highly reactive intermediates capable of forming DNA adducts, potentially resulting in mutagenesis. May play a role in gut microbiota-host metabolic interaction. O-sulfonates 4-ethylphenol (4-EP), a dietary tyrosine-derived metabolite produced by gut bacteria. The product 4-EPS crosses the blood-brain barrier and may negatively regulate oligodendrocyte maturation and myelination, affecting the functional connectivity of different brain regions associated with the limbic system. Catalyzes the sulfate conjugation of dopamine. Catalyzes the sulfation of T4 (L-thyroxine/3,5,3',5'-tetraiodothyronine), T3 (3,5,3'-triiodothyronine), rT3 (3,3',5'-triiodothyronine) and 3,3'-T2 (3,3'-diiodothyronine), with a substrate preference of 3,3'-T2 &gt; rT3 &gt; T3 &gt; T4. This Homo sapiens (Human) protein is Sulfotransferase 1A1 (SULT1A1).